The sequence spans 274 residues: NH(3)-dependent NAD(+) synthetase (274 aa).

Position 46 to 53 (46 to 53) interacts with ATP; that stretch reads GISGGQDS. D52 is a binding site for Mg(2+). Residue R140 coordinates deamido-NAD(+). T160 provides a ligand contact to ATP. E165 is a Mg(2+) binding site. Deamido-NAD(+)-binding residues include K173 and D180. Residues K189 and T211 each contribute to the ATP site. 260–261 serves as a coordination point for deamido-NAD(+); the sequence is HK.

This sequence belongs to the NAD synthetase family. In terms of assembly, homodimer.

The catalysed reaction is deamido-NAD(+) + NH4(+) + ATP = AMP + diphosphate + NAD(+) + H(+). The protein operates within cofactor biosynthesis; NAD(+) biosynthesis; NAD(+) from deamido-NAD(+) (ammonia route): step 1/1. In terms of biological role, catalyzes the ATP-dependent amidation of deamido-NAD to form NAD. Uses ammonia as a nitrogen source. In Listeria innocua serovar 6a (strain ATCC BAA-680 / CLIP 11262), this protein is NH(3)-dependent NAD(+) synthetase.